The sequence spans 422 residues: Dioxygenase str8 (422 aa).

Cys-73, Cys-75, Cys-78, and His-119 together coordinate Zn(2+). The Fe cation site is built by His-243, Asp-245, and His-382.

The protein belongs to the gamma-BBH/TMLD family. Fe(2+) serves as cofactor.

Its pathway is mycotoxin biosynthesis. Functionally, dioxygenase; part of the gene cluster that mediates the biosynthesis of strobilurin A, an antifungal polyketide that contains a key beta-methoxyacrylate toxophore that targets the complex III of the mitochondrial electron transport chain. Strobilurin biosynthesis begins with construction of benzoyl CoA by step-wise elimination of ammonia from phenylalanine by the phenylalanine ammonia-lyase str11, oxygenation by str8 and retro-Claisen reaction to form benzoic acid, which is activated to its CoA thiolester benzoyl CoA by the dedicated CoA ligase str10. Benzoyl CoA forms the starter unit for the highly reducing polyketide synthase stpks1 that produces the polyketide prestrobilutin A. The FAD-dependent oxygenase str9 then catalyzes the key oxidative rearrangement responsible for the creation of the beta-methoxyacrylate toxophore. Str9 performs epoxidation of the 2,3 olefin of prestrobilutin A, followed by Meinwald rearrangement to furnish the aldehyde intermediate. Rapid enolization of the aldehyde intermediate would give the beta-methoxyacrylate skeleton and methylations catalyzed by str2 and str3 complete the synthesis and lead to the production of strobilurin A. The short-chain dehydrogenase stl2 and the dehydrogenase str4 play a role in the shunt pathway leading to the production of bolineol. The cluster encodes no obvious halogenase gene that could be involved in production of strobilurin B, nor any obvious dimethylallyl-transferase that could be involved in the production of strobilurin G. It is possible that unknown proteins encoded in, or near, the cluster (such as str1 or stl1) may form new classes of halogenases or dimethylally-transferases, or that the responsible genes are located elsewhere on the genome. Similarly, proteins encoded by str5/str6 hydrolases appear to have no chemical role in the biosynthesis of strobilurin A. Finally, no obvious self-resistance gene is found within the cluster. In Strobilurus tenacellus, this protein is Dioxygenase str8.